The following is a 302-amino-acid chain: Deubiquitinase OTUD6B (302 aa).

Positions 1–10 are enriched in acidic residues; that stretch reads MEGSEDEEAE. 2 disordered regions span residues 1–52 and 99–121; these read MEGS…KQLA and EQQI…AALE. Positions 106–116 are enriched in basic residues; that stretch reads RISKAQKRREK. The OTU domain maps to 156 to 293; the sequence is LEIKQIPSDG…GEHYNSVKLL (138 aa). Positions 161 to 167 are cys-loop; that stretch reads IPSDGHC. Residue aspartate 164 is part of the active site. The active-site Nucleophile is cysteine 167. Residues 228-238 form a variable-loop region; sequence IANTAAWGGQL. Positions 276 to 286 are his-loop; that stretch reads YMRHAYGLGEH. Histidine 286 is an active-site residue.

The enzyme catalyses Thiol-dependent hydrolysis of ester, thioester, amide, peptide and isopeptide bonds formed by the C-terminal Gly of ubiquitin (a 76-residue protein attached to proteins as an intracellular targeting signal).. In terms of biological role, deubiquitinating enzyme that may play a role in the ubiquitin-dependent regulation of different cellular processes. This is Deubiquitinase OTUD6B (OTUD6B) from Gallus gallus (Chicken).